The sequence spans 555 residues: Phosphomethylpyrimidine synthase (555 aa).

Residues Asn191, Met220, Tyr249, His285, 305 to 307 (SRG), 346 to 349 (DGLR), and Glu385 each bind substrate. His389 lines the Zn(2+) pocket. Substrate is bound at residue Tyr412. Residue His453 coordinates Zn(2+). [4Fe-4S] cluster contacts are provided by Cys533, Cys536, and Cys541.

The protein belongs to the ThiC family. Homodimer. It depends on [4Fe-4S] cluster as a cofactor.

It catalyses the reaction 5-amino-1-(5-phospho-beta-D-ribosyl)imidazole + S-adenosyl-L-methionine = 4-amino-2-methyl-5-(phosphooxymethyl)pyrimidine + CO + 5'-deoxyadenosine + formate + L-methionine + 3 H(+). It functions in the pathway cofactor biosynthesis; thiamine diphosphate biosynthesis. Functionally, catalyzes the synthesis of the hydroxymethylpyrimidine phosphate (HMP-P) moiety of thiamine from aminoimidazole ribotide (AIR) in a radical S-adenosyl-L-methionine (SAM)-dependent reaction. This is Phosphomethylpyrimidine synthase from Ehrlichia ruminantium (strain Welgevonden).